Consider the following 168-residue polypeptide: Photosystem I assembly protein Ycf3 (168 aa).

3 TPR repeats span residues 35 to 68 (AFTY…EIDP), 72 to 105 (SYIL…NPFL), and 120 to 153 (GEQA…TPGN).

The protein belongs to the Ycf3 family.

It localises to the plastid. The protein resides in the chloroplast thylakoid membrane. Essential for the assembly of the photosystem I (PSI) complex. May act as a chaperone-like factor to guide the assembly of the PSI subunits. The sequence is that of Photosystem I assembly protein Ycf3 from Nandina domestica (Heavenly bamboo).